Consider the following 1010-residue polypeptide: Contactin-1 (1010 aa).

Residues 1–19 (MRFFISHLVTLCFIFCVAD) form the signal peptide. Ig-like C2-type domains follow at residues 33–123 (PVFE…ATLS), 132–215 (PEEH…KSVF), 232–317 (PADI…ARVY), 322–398 (PEWV…AELK), 404–491 (PTFE…GVLE), and 496–592 (TRIT…LVVR). Intrachain disulfides connect Cys-57-Cys-106 and Cys-150-Cys-203. 2 N-linked (GlcNAc...) asparagine glycosylation sites follow: Asn-200 and Asn-249. The cysteines at positions 254 and 301 are disulfide-linked. A glycan (N-linked (GlcNAc...) asparagine) is linked at Asn-329. Cystine bridges form between Cys-343/Cys-382 and Cys-427/Cys-475. N-linked (GlcNAc...) asparagine glycans are attached at residues Asn-448, Asn-464, Asn-485, and Asn-512. A disulfide bridge connects residues Cys-517 and Cys-574. Asn-582 carries an N-linked (GlcNAc...) asparagine glycan. 4 consecutive Fibronectin type-III domains span residues 597–695 (PPGG…TEGA), 700–797 (APSD…SAQD), 802–897 (VPTD…APPS), and 899–990 (RPRI…TAGV). Residues 679–689 (GTGEPSMPSQR) are compositionally biased toward polar residues. The segment at 679-708 (GTGEPSMPSQRIRTEGAPPNVAPSDVGGGG) is disordered. Asn-924 carries an N-linked (GlcNAc...) asparagine glycan. Residue Ser-984 is the site of GPI-anchor amidated serine attachment. The propeptide at 985–1010 (GATAGVPTLLLGLVLPALGVLAYSGF) is removed in mature form.

Belongs to the immunoglobulin superfamily. Contactin family. Interacts with TNR.

It is found in the cell membrane. Mediates cell surface interactions during nervous system development. Interaction with TNR enhances the neurite outgrowth. This Gallus gallus (Chicken) protein is Contactin-1 (CNTN1).